The primary structure comprises 227 residues: Probable methylthioribulose-1-phosphate dehydratase (227 aa).

C87 is a substrate binding site. 2 residues coordinate Zn(2+): H105 and H107. The active-site Proton donor/acceptor is E129. H185 contacts Zn(2+).

It belongs to the aldolase class II family. MtnB subfamily. The cofactor is Zn(2+).

The protein localises to the cytoplasm. It catalyses the reaction 5-(methylsulfanyl)-D-ribulose 1-phosphate = 5-methylsulfanyl-2,3-dioxopentyl phosphate + H2O. It participates in amino-acid biosynthesis; L-methionine biosynthesis via salvage pathway; L-methionine from S-methyl-5-thio-alpha-D-ribose 1-phosphate: step 2/6. Its function is as follows. Catalyzes the dehydration of methylthioribulose-1-phosphate (MTRu-1-P) into 2,3-diketo-5-methylthiopentyl-1-phosphate (DK-MTP-1-P). This Drosophila melanogaster (Fruit fly) protein is Probable methylthioribulose-1-phosphate dehydratase.